Consider the following 349-residue polypeptide: tRNA-specific 2-thiouridylase MnmA (349 aa).

Residues 6 to 13 (LLSGGVDS) and methionine 32 contribute to the ATP site. Residue cysteine 103 is the Nucleophile of the active site. A disulfide bond links cysteine 103 and cysteine 195. Residue glycine 127 participates in ATP binding. Residues 145–147 (KDQ) form an interaction with tRNA region. The Cysteine persulfide intermediate role is filled by cysteine 195.

The protein belongs to the MnmA/TRMU family.

It is found in the cytoplasm. The catalysed reaction is S-sulfanyl-L-cysteinyl-[protein] + uridine(34) in tRNA + AH2 + ATP = 2-thiouridine(34) in tRNA + L-cysteinyl-[protein] + A + AMP + diphosphate + H(+). In terms of biological role, catalyzes the 2-thiolation of uridine at the wobble position (U34) of tRNA, leading to the formation of s(2)U34. This is tRNA-specific 2-thiouridylase MnmA from Pseudothermotoga lettingae (strain ATCC BAA-301 / DSM 14385 / NBRC 107922 / TMO) (Thermotoga lettingae).